The primary structure comprises 347 residues: tRNA pseudouridine synthase D (347 aa).

Asp-78 functions as the Nucleophile in the catalytic mechanism. Residues 150-304 (GLPNFFGPQR…AEGTRRAARL (155 aa)) enclose the TRUD domain.

This sequence belongs to the pseudouridine synthase TruD family.

It carries out the reaction uridine(13) in tRNA = pseudouridine(13) in tRNA. Responsible for synthesis of pseudouridine from uracil-13 in transfer RNAs. This Anaeromyxobacter dehalogenans (strain 2CP-C) protein is tRNA pseudouridine synthase D.